The chain runs to 417 residues: Gamma-glutamyl phosphate reductase (417 aa).

Belongs to the gamma-glutamyl phosphate reductase family.

Its subcellular location is the cytoplasm. It catalyses the reaction L-glutamate 5-semialdehyde + phosphate + NADP(+) = L-glutamyl 5-phosphate + NADPH + H(+). It functions in the pathway amino-acid biosynthesis; L-proline biosynthesis; L-glutamate 5-semialdehyde from L-glutamate: step 2/2. In terms of biological role, catalyzes the NADPH-dependent reduction of L-glutamate 5-phosphate into L-glutamate 5-semialdehyde and phosphate. The product spontaneously undergoes cyclization to form 1-pyrroline-5-carboxylate. The chain is Gamma-glutamyl phosphate reductase from Idiomarina loihiensis (strain ATCC BAA-735 / DSM 15497 / L2-TR).